Here is a 219-residue protein sequence, read N- to C-terminus: uncharacterized protein (219 aa).

A disordered region spans residues 70-102 (VHIGDNHPEPKNESKTQPKIESKKEPTLKQEEQ). Positions 73–101 (GDNHPEPKNESKTQPKIESKKEPTLKQEE) are enriched in basic and acidic residues. Positions 96 to 120 (TLKQEEQTIQAEEEAQKIAKEETRE) form a coiled coil. 3 helical membrane passes run 126-146 (GGEI…VNML), 153-173 (IFGL…VIVL), and 192-212 (TYGV…AIFF).

The protein localises to the membrane. This is an uncharacterized protein from Acanthamoeba polyphaga mimivirus (APMV).